A 510-amino-acid chain; its full sequence is Lysine--tRNA ligase (510 aa).

Glutamate 420 and glutamate 427 together coordinate Mg(2+).

Belongs to the class-II aminoacyl-tRNA synthetase family. In terms of assembly, homodimer. It depends on Mg(2+) as a cofactor.

It localises to the cytoplasm. The catalysed reaction is tRNA(Lys) + L-lysine + ATP = L-lysyl-tRNA(Lys) + AMP + diphosphate. The sequence is that of Lysine--tRNA ligase from Psychrobacter sp. (strain PRwf-1).